We begin with the raw amino-acid sequence, 488 residues long: Ribulose bisphosphate carboxylase large chain (488 aa).

Positions 127 and 177 each coordinate substrate. Lys179 (proton acceptor) is an active-site residue. Lys181 contacts substrate. Mg(2+) contacts are provided by Lys205, Asp207, and Glu208. An N6-carboxylysine modification is found at Lys205. The active-site Proton acceptor is the His297. Arg298, His330, and Ser382 together coordinate substrate.

It belongs to the RuBisCO large chain family. Type I subfamily. Heterohexadecamer of 8 large chains and 8 small chains. It depends on Mg(2+) as a cofactor.

The protein localises to the plastid. Its subcellular location is the chloroplast. The catalysed reaction is 2 (2R)-3-phosphoglycerate + 2 H(+) = D-ribulose 1,5-bisphosphate + CO2 + H2O. It catalyses the reaction D-ribulose 1,5-bisphosphate + O2 = 2-phosphoglycolate + (2R)-3-phosphoglycerate + 2 H(+). Its function is as follows. RuBisCO catalyzes two reactions: the carboxylation of D-ribulose 1,5-bisphosphate, the primary event in carbon dioxide fixation, as well as the oxidative fragmentation of the pentose substrate in the photorespiration process. Both reactions occur simultaneously and in competition at the same active site. The polypeptide is Ribulose bisphosphate carboxylase large chain (Cyanidium caldarium (Red alga)).